The sequence spans 339 residues: Protein-lysine N-methyltransferase EFM3 (339 aa).

Residues W137 and G174–G176 contribute to the S-adenosyl-L-methionine site. Residue T177 is modified to Phosphothreonine. Residues D199, W233, and A248 each contribute to the S-adenosyl-L-methionine site.

The protein belongs to the class I-like SAM-binding methyltransferase superfamily. EEF2KMT family.

It is found in the cytoplasm. Functionally, S-adenosyl-L-methionine-dependent protein-lysine N-methyltransferase that mono-, di- and trimethylates elongation factor 2 (EFT1/EFT2) at 'Lys-509'. This chain is Protein-lysine N-methyltransferase EFM3, found in Saccharomyces cerevisiae (strain ATCC 204508 / S288c) (Baker's yeast).